The following is a 432-amino-acid chain: D-amino acid dehydrogenase (432 aa).

Val3–Tyr17 contributes to the FAD binding site.

The protein belongs to the DadA oxidoreductase family. FAD serves as cofactor.

It catalyses the reaction a D-alpha-amino acid + A + H2O = a 2-oxocarboxylate + AH2 + NH4(+). The protein operates within amino-acid degradation; D-alanine degradation; NH(3) and pyruvate from D-alanine: step 1/1. Functionally, oxidative deamination of D-amino acids. In Stutzerimonas stutzeri (strain A1501) (Pseudomonas stutzeri), this protein is D-amino acid dehydrogenase.